Consider the following 547-residue polypeptide: Probable acetolactate synthase (547 aa).

Glu57 contacts thiamine diphosphate. FAD-binding positions include Pro159 and 299-318 (DRVE…LYGD). The thiamine pyrophosphate binding stretch occupies residues 388 to 468 (DFGSYAGRMI…VVSVIGNNGI (81 aa)). Positions 439 and 466 each coordinate Mg(2+).

Belongs to the TPP enzyme family. Mg(2+) serves as cofactor. The cofactor is thiamine diphosphate.

It catalyses the reaction 2 pyruvate + H(+) = (2S)-2-acetolactate + CO2. The protein operates within amino-acid biosynthesis; L-isoleucine biosynthesis; L-isoleucine from 2-oxobutanoate: step 1/4. It functions in the pathway amino-acid biosynthesis; L-valine biosynthesis; L-valine from pyruvate: step 1/4. This chain is Probable acetolactate synthase (ilvG), found in Mycobacterium bovis (strain ATCC BAA-935 / AF2122/97).